Reading from the N-terminus, the 228-residue chain is MATSLTWHDVLAQEKQQSYFINTLEFVGKERSAGKTIYPPQKDVFNAFRFTELHQVKVVILGQDPYHGPNQAHGLSFSVRPGVPAPPSLGNIYKELASDIPGFEIPRHGFLQSWAEQGVLLLNTVLTVEAGQAHSHANLGWETFTDRVIAALNEQREGLVFLLWGSHAQKKGNIIDPQRHHVLKSPHPSPLSAHRGFLGCKHFSQANQLLEQQGLSAIDWTPRLPEEA.

Aspartate 64 (proton acceptor) is an active-site residue.

Belongs to the uracil-DNA glycosylase (UDG) superfamily. UNG family.

The protein localises to the cytoplasm. The catalysed reaction is Hydrolyzes single-stranded DNA or mismatched double-stranded DNA and polynucleotides, releasing free uracil.. Its function is as follows. Excises uracil residues from the DNA which can arise as a result of misincorporation of dUMP residues by DNA polymerase or due to deamination of cytosine. This is Uracil-DNA glycosylase from Pectobacterium atrosepticum (strain SCRI 1043 / ATCC BAA-672) (Erwinia carotovora subsp. atroseptica).